Reading from the N-terminus, the 411-residue chain is Phospholipase ABHD3 (411 aa).

A helical; Signal-anchor for type II membrane protein transmembrane segment spans residues 25-45 (VGFFGSGVGFSLILGFSVAYA). Positions 140 to 247 (PTVLLLPGLT…PLKAAATFSV (108 aa)) constitute an AB hydrolase-1 domain. Catalysis depends on charge relay system residues Ser220, Asp346, and His375.

The protein belongs to the AB hydrolase superfamily. AB hydrolase 4 family.

Its subcellular location is the membrane. It carries out the reaction a 1,2-diacyl-sn-glycero-3-phosphocholine + H2O = a 1-acyl-sn-glycero-3-phosphocholine + a fatty acid + H(+). It catalyses the reaction a 1,2-diacyl-sn-glycero-3-phosphocholine + H2O = a 2-acyl-sn-glycero-3-phosphocholine + a fatty acid + H(+). The enzyme catalyses 1-tetradecanoyl-2-(9Z,12Z-octadecadienoyl)-sn-glycero-3-phosphocholine + H2O = 2-(9Z,12Z-octadecadienoyl)-sn-glycero-3-phosphocholine + tetradecanoate + H(+). The catalysed reaction is 1-tetradecanoyl-2-(9Z,12Z-octadecadienoyl)-sn-glycero-3-phosphocholine + H2O = 1-tetradecanoyl-sn-glycero-3-phosphocholine + (9Z,12Z)-octadecadienoate + H(+). It carries out the reaction 1-tetradecanoyl-2-(5Z,8Z,11Z,14Z-eicosatetraenoyl)-sn-glycero-3-phosphocholine + H2O = 2-(5Z,8Z,11Z,14Z)-eicosatetraenoyl-sn-glycero-3-phosphocholine + tetradecanoate + H(+). It catalyses the reaction 1-tetradecanoyl-2-(4Z,7Z,10Z,13Z,16Z,19Z-docosahexaenoyl)-sn-glycero-3-phosphocholine + H2O = 2-(4Z,7Z,10Z,13Z,16Z,19Z-docosahexaenoyl)-sn-glycero-3-phosphocholine + tetradecanoate + H(+). The enzyme catalyses 1,2-ditetradecanoyl-sn-glycero-3-phosphocholine + H2O = 2-tetradecanoyl-sn-glycero-3-phosphocholine + tetradecanoate + H(+). The catalysed reaction is 1-octadecanoyl-2-acetyl-sn-glycero-3-phosphocholine + H2O = 1-octadecanoyl-sn-glycero-3-phosphocholine + acetate + H(+). It carries out the reaction 1,2-ditetradecanoyl-sn-glycero-3-phosphocholine + H2O = 1-tetradecanoyl-sn-glycero-3-phosphocholine + tetradecanoate + H(+). It catalyses the reaction 1-octadecanoyl-2-pentanoyl-sn-glycero-3-phosphocholine + H2O = pentanoate + 1-octadecanoyl-sn-glycero-3-phosphocholine + H(+). The enzyme catalyses 1-octadecanoyl-2-hexanoyl-sn-glycero-3-phosphocholine + H2O = hexanoate + 1-octadecanoyl-sn-glycero-3-phosphocholine + H(+). The catalysed reaction is 1-octadecanoyl-2-octanoyl-sn-glycero-3-phosphocholine + H2O = 1-octadecanoyl-sn-glycero-3-phosphocholine + octanoate + H(+). It carries out the reaction 1-octadecanoyl-2-nonanoyl-sn-glycero-3-phosphocholine + H2O = nonanoate + 1-octadecanoyl-sn-glycero-3-phosphocholine + H(+). It catalyses the reaction 1-O-hexadecyl-2-nonadioyl-sn-glycero-3-phosphocholine + H2O = nonanedioate + 1-O-hexadecyl-sn-glycero-3-phosphocholine + H(+). The enzyme catalyses 1-hexadecanoyl-2-nonadioyl-sn-glycero-3-phosphocholine + H2O = nonanedioate + 1-hexadecanoyl-sn-glycero-3-phosphocholine + H(+). The catalysed reaction is 1-hexadecanoyl-2-(9-oxononanoyl)-sn-glycero-3-phosphocholine + H2O = 9-oxononanoate + 1-hexadecanoyl-sn-glycero-3-phosphocholine + H(+). It carries out the reaction 1-hexadecanoyl-2-(5-oxopentanoyl)-sn-glycero-3-phosphocholine + H2O = 5-oxopentanoate + 1-hexadecanoyl-sn-glycero-3-phosphocholine + H(+). It catalyses the reaction 1-hexadecanoyl-2-glutaroyl-sn-glycero-3-phosphocholine + H2O = glutarate + 1-hexadecanoyl-sn-glycero-3-phosphocholine + H(+). The enzyme catalyses 1-O-hexadecyl-2-acetyl-sn-glycero-3-phosphocholine + H2O = 1-O-hexadecyl-sn-glycero-3-phosphocholine + acetate + H(+). Functionally, phospholipase that may play a role in phospholipids remodeling. May selectively cleave myristate (C14)-containing phosphatidylcholines through its predominant phospholipase 1 activity, cleaving preferentially acyl groups in sn1 position. In parallel, may have a minor phospholipase 2 activity acting on acyl groups in position sn2. In addition to (C14)-containing phosphatidylcholines, may also act on other medium-chain-containing and oxidatively truncated phospholipids. This is Phospholipase ABHD3 from Bos taurus (Bovine).